The sequence spans 245 residues: GDSL esterase/lipase At4g16220 (245 aa).

The signal sequence occupies residues 1–24 (MSSLVSRCQVIALLVLFFFGVCLA). S37 (nucleophile) is an active-site residue.

This sequence belongs to the 'GDSL' lipolytic enzyme family.

The protein localises to the secreted. The protein is GDSL esterase/lipase At4g16220 of Arabidopsis thaliana (Mouse-ear cress).